We begin with the raw amino-acid sequence, 318 residues long: tRNA uridine(34) hydroxylase (318 aa).

The Rhodanese domain maps to 123–217 (EDDDTVIIDA…YGKDPETKGQ (95 aa)). The Cysteine persulfide intermediate role is filled by cysteine 177.

The protein belongs to the TrhO family.

The enzyme catalyses uridine(34) in tRNA + AH2 + O2 = 5-hydroxyuridine(34) in tRNA + A + H2O. In terms of biological role, catalyzes oxygen-dependent 5-hydroxyuridine (ho5U) modification at position 34 in tRNAs. In Staphylococcus aureus (strain bovine RF122 / ET3-1), this protein is tRNA uridine(34) hydroxylase.